A 540-amino-acid polypeptide reads, in one-letter code: T-complex protein 1 subunit theta (540 aa).

It belongs to the TCP-1 chaperonin family. As to quaternary structure, heterooligomeric complex of about 850 to 900 kDa that forms two stacked rings, 12 to 16 nm in diameter.

The protein resides in the cytoplasm. Its function is as follows. Molecular chaperone; assists the folding of proteins upon ATP hydrolysis. Known to play a role, in vitro, in the folding of actin and tubulin. In yeast may play a role in mitotic spindle formation. The polypeptide is T-complex protein 1 subunit theta (CCT8) (Candida albicans (Yeast)).